We begin with the raw amino-acid sequence, 125 residues long: Small ribosomal subunit protein uS13 (125 aa).

This sequence belongs to the universal ribosomal protein uS13 family. Part of the 30S ribosomal subunit. Forms a loose heterodimer with protein S19. Forms two bridges to the 50S subunit in the 70S ribosome.

Located at the top of the head of the 30S subunit, it contacts several helices of the 16S rRNA. In the 70S ribosome it contacts the 23S rRNA (bridge B1a) and protein L5 of the 50S subunit (bridge B1b), connecting the 2 subunits; these bridges are implicated in subunit movement. Contacts the tRNAs in the A and P-sites. This Rickettsia akari (strain Hartford) protein is Small ribosomal subunit protein uS13.